We begin with the raw amino-acid sequence, 308 residues long: Porphobilinogen deaminase (308 aa).

S-(dipyrrolylmethanemethyl)cysteine is present on Cys-240.

The protein belongs to the HMBS family. In terms of assembly, monomer. It depends on dipyrromethane as a cofactor.

It carries out the reaction 4 porphobilinogen + H2O = hydroxymethylbilane + 4 NH4(+). It participates in porphyrin-containing compound metabolism; protoporphyrin-IX biosynthesis; coproporphyrinogen-III from 5-aminolevulinate: step 2/4. In terms of biological role, tetrapolymerization of the monopyrrole PBG into the hydroxymethylbilane pre-uroporphyrinogen in several discrete steps. The protein is Porphobilinogen deaminase of Laribacter hongkongensis (strain HLHK9).